A 347-amino-acid chain; its full sequence is GPN-loop GTPase 2 (347 aa).

A GTP-binding site is contributed by 12 to 17 (GSGKST). The Gly-Pro-Asn (GPN)-loop; involved in dimer interface signature appears at 69-71 (GPN). 175–178 (SKID) is a binding site for GTP.

This sequence belongs to the GPN-loop GTPase family. Heterodimers with NPA3/GPN1 or GPN3. Binds to RNA polymerase II (RNAPII).

The protein localises to the cytoplasm. Its function is as follows. Small GTPase required for proper localization of RNA polymerase II and III (RNAPII and RNAPIII). May act at an RNAP assembly step prior to nuclear import. Required for establishment of sister chromatid cohesion. This Saccharomyces cerevisiae (strain ATCC 204508 / S288c) (Baker's yeast) protein is GPN-loop GTPase 2.